Here is a 331-residue protein sequence, read N- to C-terminus: Thioredoxin-like fold domain-containing protein MRL7, chloroplastic (331 aa).

A chloroplast-targeting transit peptide spans 1–59; it reads MSFFAVACSAPRSSMLLTGLNSSFSDMHRSPLFVFPVTISSRSVKRFAAVSSDSVLDPE. Disordered stretches follow at residues 52 to 105 and 141 to 160; these read SDSV…ADAV and GVDE…EDPD. Over residues 142–160 the composition is skewed to acidic residues; sequence VDEEEEEEEEMVVEEEDPD.

As to quaternary structure, component of the transcriptionally active chromosome (TAC) complexes. Interacts with FSD2 and PRDA1. Interacts with FSD3 and CITRX/TRXZ. Binds to PTAC12/HMR/PAP5. In terms of tissue distribution, expressed in leaves, shoots, stems, cauline leaves, flower buds, flowers and siliques.

The protein resides in the plastid. Its subcellular location is the chloroplast. It localises to the chloroplast stroma. The protein localises to the chloroplast nucleoid. It is found in the nucleus. Functionally, plays an essential role in early steps of chloroplast development. Involved in the regulation of plastid gene expression. May positively regulate plastid-encoded RNA polymerase (PEP) activity through binding to FSD3 and CITRX/TRXZ. Involved in redox-mediated regulation of chloroplast development. Possesses disulfide reductase activity in vitro. Required for the proper function of the plastid transcriptional machinery and protein accumulation in thylakoid membranes. May function as molecular chaperone to ensure proper organization of the nucleoids in chloroplasts. May mediate some aspect of thylakoid structure or function that controls non-photochemical quenching (NPQ). Participates in the early light signaling events of photobody biogenesis in chloroplasts. May mediate the degradation of two repressors of chloroplast biogenesis, PIF1 and PIF3 in nucleus. Collaboratively with PTAC12/HMR/PAP5, involved in the regulation of thermoresponsive responses via the stabilization of PIF4 in the daytime to initiate thermomorphogenesis. This Arabidopsis thaliana (Mouse-ear cress) protein is Thioredoxin-like fold domain-containing protein MRL7, chloroplastic.